The primary structure comprises 712 residues: Patatin-like phospholipase domain-containing protein ACLA_029670 (712 aa).

Residues 1–10 (MTSAEKSATR) show a composition bias toward polar residues. The segment at 1-20 (MTSAEKSATRNIYDPSALPD) is disordered. Residues 85-105 (WPFLFIVFAWITVLGIAYALT) traverse the membrane as a helical segment. The PNPLA domain occupies 275–466 (LCLSGGATFA…RTDIPIKALN (192 aa)). A GXSXG motif is present at residues 306–310 (GTSGG). Residue serine 308 is the Nucleophile of the active site. The active-site Proton acceptor is aspartate 453. Positions 649 to 664 (FPERHSDYKDESHYTE) are enriched in basic and acidic residues. The disordered stretch occupies residues 649-686 (FPERHSDYKDESHYTEVSDSLSTNSSRPHTPDARRGSI). Residues 665-676 (VSDSLSTNSSRP) are compositionally biased toward polar residues. The segment covering 677 to 686 (HTPDARRGSI) has biased composition (basic and acidic residues).

It belongs to the PLPL family.

It localises to the membrane. Functionally, probable lipid hydrolase. This Aspergillus clavatus (strain ATCC 1007 / CBS 513.65 / DSM 816 / NCTC 3887 / NRRL 1 / QM 1276 / 107) protein is Patatin-like phospholipase domain-containing protein ACLA_029670.